The sequence spans 136 residues: NADPH-dependent 7-cyano-7-deazaguanine reductase (136 aa).

The Thioimide intermediate role is filled by Cys53. The active-site Proton donor is the Asp60. Substrate contacts are provided by residues 75-77 (VEL) and 94-95 (HE).

This sequence belongs to the GTP cyclohydrolase I family. QueF type 1 subfamily.

It is found in the cytoplasm. The enzyme catalyses 7-aminomethyl-7-carbaguanine + 2 NADP(+) = 7-cyano-7-deazaguanine + 2 NADPH + 3 H(+). The protein operates within tRNA modification; tRNA-queuosine biosynthesis. Its function is as follows. Catalyzes the NADPH-dependent reduction of 7-cyano-7-deazaguanine (preQ0) to 7-aminomethyl-7-deazaguanine (preQ1). This Trichormus variabilis (strain ATCC 29413 / PCC 7937) (Anabaena variabilis) protein is NADPH-dependent 7-cyano-7-deazaguanine reductase.